Here is an 83-residue protein sequence, read N- to C-terminus: U15-theraphotoxin-Cg1a (83 aa).

Positions 1–21 (MKAAILLAFAGLALLSVICHA) are cleaved as a signal peptide. Residues 22–49 (SENVEQDSFEEVFSAIFAMEDDLKPKER) constitute a propeptide that is removed on maturation. 3 disulfide bridges follow: C51–C66, C58–C71, and C65–C77. Residue A81 is modified to Alanine amide.

The protein belongs to the neurotoxin 10 (Hwtx-1) family. 66 (Jztx-24) subfamily. In terms of tissue distribution, expressed by the venom gland.

The protein resides in the secreted. In terms of biological role, probable ion channel inhibitor. In Chilobrachys guangxiensis (Chinese earth tiger tarantula), this protein is U15-theraphotoxin-Cg1a.